The sequence spans 577 residues: Vacuolar membrane amino acid uptake transporter fnx2 (577 aa).

A compositionally biased stretch (polar residues) spans 1-14 (MSNPRTKSPNTNRG). Positions 1–80 (MSNPRTKSPN…SPHRQDAATT (80 aa)) are disordered. Over residues 22–39 (SALLNDSLSSLNGNSSYD) the composition is skewed to low complexity. Positions 40–62 (SIKDSSKNNKDVAEVNEYPRRPE) are enriched in basic and acidic residues. 14 helical membrane-spanning segments follow: residues 91–111 (VLPA…IVAS), 123–145 (FSQV…PLFG), 157–177 (LLAA…SRSL), 186–206 (IAGI…SDIV), 217–237 (IINV…GYFA), 244–264 (IGFL…YFTL), 286–306 (LILL…GGNV), 317–337 (LLIA…FVAF), 356–376 (LCNF…PLFF), 391–411 (LIPM…VISL), 418–438 (ITVG…RYGY), 448–468 (YPFS…VAII), 490–510 (GCVL…GIKL), and 547–567 (LLGS…CAFV).

This sequence belongs to the major facilitator superfamily.

The protein localises to the vacuole. The protein resides in the membrane. MFS-type transporter involved in vacuolar amino acid uptake. The polypeptide is Vacuolar membrane amino acid uptake transporter fnx2 (fnx2) (Schizosaccharomyces pombe (strain 972 / ATCC 24843) (Fission yeast)).